Consider the following 161-residue polypeptide: MGKLTVCTSKPYLNFSRAIRTYLCGSKCDNAIYFTPQKIVIELVQEKKTTQLLLLLAASIALYLLSPQLGARMLFELVQARTTSVSNSSVAAALFACAGEEIINPAIFLFLHVLTLVIVLAMAAEVIYNRCRRTTRPTAPPPPVNNADFNLADALDETYNK.

Residues N14 and N87 are each glycosylated (N-linked (GlcNAc...) asparagine; by host). A helical membrane pass occupies residues 102-129; it reads IINPAIFLFLHVLTLVIVLAMAAEVIYN.

The protein resides in the host membrane. The chain is Early E3 17.7 kDa glycoprotein from Murine adenovirus A serotype 1 (MAdV-1).